Consider the following 311-residue polypeptide: Pyrimidine-specific ribonucleoside hydrolase RihA (311 aa).

His-240 is a catalytic residue.

Belongs to the IUNH family. RihA subfamily.

In terms of biological role, hydrolyzes cytidine or uridine to ribose and cytosine or uracil, respectively. The sequence is that of Pyrimidine-specific ribonucleoside hydrolase RihA from Salmonella typhimurium (strain LT2 / SGSC1412 / ATCC 700720).